Here is a 273-residue protein sequence, read N- to C-terminus: Transposon Tn7 transposition protein TnsA (273 aa).

Active-site residues include Glu63 and Glu73. Residues 90-108 (TRQIAIDSGIKHPVIRGVD) constitute a DNA-binding region (H-T-H motif). Residue Asp114 is part of the active site. Mg(2+) contacts are provided by Asp114, Gln130, and Val131. Lys132 is a catalytic residue.

In terms of assembly, heteromer with TnsB. Interacts with TnsC (via C-terminus); this interaction allows TnsA to bind donor DNA. Mg(2+) is required as a cofactor. The cofactor is Mn(2+).

Required for Tn7 transposition. Forms the transposase, together with TnsB. TnsA executes the 5'-DNA strand breakage reaction. TnsABC and TnsD promote high-frequency insertion of Tn7 into a specific target site known as att-Tn7 whereas TnsABC and TnsE promote low-frequency insertion into many different sites. In Escherichia coli, this protein is Transposon Tn7 transposition protein TnsA.